A 3343-amino-acid polypeptide reads, in one-letter code: Cadherin-3 (3343 aa).

Residues 1 to 26 (MTIRIFFSIFLLNHLIFFHLFNFTHQ) form the signal peptide. N-linked (GlcNAc...) asparagine glycosylation is present at N22. Residues 27 to 3228 (FSEETIKFSV…LFSNFSNTTT (3202 aa)) are Extracellular-facing. 3 Cadherin domains span residues 28 to 117 (SEET…SPIF), 118 to 229 (PIDV…PPNF), and 242 to 330 (PNTK…EPNI). N-linked (GlcNAc...) asparagine glycans are attached at residues N149, N250, N288, N369, N467, and N612. In terms of domain architecture, Cadherin 4 spans 632 to 738 (ICQITEIHVL…EDVNDNVPKF (107 aa)). 16 N-linked (GlcNAc...) asparagine glycosylation sites follow: N752, N806, N941, N966, N970, N985, N1042, N1335, N1425, N1429, N1557, N1563, N1597, N1624, N1695, and N1702. The 90-residue stretch at 1279-1368 (RENELMFEIE…ADVNDNKPKI (90 aa)) folds into the Cadherin 5 domain. 3 Cadherin domains span residues 1545-1648 (DKAA…APRF), 1676-1756 (AEDL…TPEF), and 1757-1857 (ELSS…HPMI). N-linked (GlcNAc...) asparagine glycans are attached at residues N1895 and N1900. Cadherin domains follow at residues 1954–2045 (TVSV…SPRF), 2046–2145 (DQQL…NAPR), and 2146–2245 (FSRI…APIF). 19 N-linked (GlcNAc...) asparagine glycosylation sites follow: N2053, N2129, N2203, N2382, N2391, N2410, N2414, N2431, N2527, N2530, N2564, N2621, N2665, N2712, N2798, N2809, N2927, N2976, and N3045. One can recognise a Laminin G-like domain in the interval 3040 to 3205 (EISVRNGTSH…SSTGTSRNEC (166 aa)). The cysteines at positions 3172 and 3205 are disulfide-linked. N-linked (GlcNAc...) asparagine glycosylation is found at N3222 and N3225. Residues 3229–3250 (LILLITLALISLIGFSVCLLAI) form a helical membrane-spanning segment. Residues 3251–3343 (RRRWRQKSPG…RDGHINMAYL (93 aa)) are Cytoplasmic-facing. The segment at 3257-3277 (KSPGDQKQTERSNGWTGHVMP) is disordered.

As to expression, expressed in the anchor cell.

The protein resides in the cell membrane. The protein localises to the basolateral cell membrane. Its subcellular location is the cell junction. Functionally, cell adhesion protein involved in the control of epithelial morphogenesis. Together with metalloproteinase zmp-1 and hemicentin him-4, plays a role in anchor cell (AC) invasion during postembryonic vulval development. This is Cadherin-3 (cdh-3) from Caenorhabditis elegans.